Consider the following 1014-residue polypeptide: DNA translocase FtsK 2 (1014 aa).

The helical transmembrane segment at Met-1–Arg-21 threads the bilayer. Disordered stretches follow at residues Glu-89–Ala-142, Arg-283–Val-318, and Ser-487–Glu-525. A compositionally biased stretch (acidic residues) spans Glu-121 to Asp-140. Positions Asp-298 to Asp-307 are enriched in polar residues. One can recognise a FtsK domain in the interval Gly-662–Arg-871. Gly-682 to Val-687 provides a ligand contact to ATP.

This sequence belongs to the FtsK/SpoIIIE/SftA family. In terms of assembly, homohexamer. Forms a ring that surrounds DNA.

The protein resides in the cell inner membrane. Functionally, essential cell division protein that coordinates cell division and chromosome segregation. The N-terminus is involved in assembly of the cell-division machinery. The C-terminus functions as a DNA motor that moves dsDNA in an ATP-dependent manner towards the dif recombination site, which is located within the replication terminus region. Translocation stops specifically at Xer-dif sites, where FtsK interacts with the Xer recombinase, allowing activation of chromosome unlinking by recombination. FtsK orienting polar sequences (KOPS) guide the direction of DNA translocation. FtsK can remove proteins from DNA as it translocates, but translocation stops specifically at XerCD-dif site, thereby preventing removal of XerC and XerD from dif. This chain is DNA translocase FtsK 2 (ftsK2), found in Neisseria meningitidis serogroup A / serotype 4A (strain DSM 15465 / Z2491).